A 368-amino-acid polypeptide reads, in one-letter code: tRNA(Met) cytidine acetate ligase (368 aa).

ATP contacts are provided by residues 7–20, G96, N152, and R175; that span reads IAEF…HKYL.

It belongs to the TmcAL family.

The protein resides in the cytoplasm. It catalyses the reaction cytidine(34) in elongator tRNA(Met) + acetate + ATP = N(4)-acetylcytidine(34) in elongator tRNA(Met) + AMP + diphosphate. In terms of biological role, catalyzes the formation of N(4)-acetylcytidine (ac(4)C) at the wobble position of elongator tRNA(Met), using acetate and ATP as substrates. First activates an acetate ion to form acetyladenylate (Ac-AMP) and then transfers the acetyl group to tRNA to form ac(4)C34. This is tRNA(Met) cytidine acetate ligase from Streptococcus pyogenes serotype M4 (strain MGAS10750).